A 411-amino-acid polypeptide reads, in one-letter code: Translation initiation factor 2 subunit gamma (411 aa).

In terms of domain architecture, tr-type G spans 9 to 203 (QAEVNIGMVG…AIEDFIPTPK (195 aa)). The tract at residues 18 to 25 (GHVDHGKT) is G1. D21, T25, G46, and T48 together coordinate Mg(2+). Residue 21-26 (DHGKTT) coordinates GTP. Positions 46-50 (GITIK) are G2. Residues C61, C64, C73, and C76 each coordinate Zn(2+). Positions 90–93 (DAPG) are G3. Residues 146-149 (NKIE) and 181-183 (SAL) each bind GTP. Residues 146–149 (NKIE) form a G4 region. The segment at 181–183 (SAL) is G5.

Belongs to the TRAFAC class translation factor GTPase superfamily. Classic translation factor GTPase family. EIF2G subfamily. As to quaternary structure, heterotrimer composed of an alpha, a beta and a gamma chain. The cofactor is Mg(2+).

It catalyses the reaction GTP + H2O = GDP + phosphate + H(+). EIF-2 functions in the early steps of protein synthesis by forming a ternary complex with GTP and initiator tRNA. This chain is Translation initiation factor 2 subunit gamma, found in Pyrococcus horikoshii (strain ATCC 700860 / DSM 12428 / JCM 9974 / NBRC 100139 / OT-3).